We begin with the raw amino-acid sequence, 715 residues long: Glycine--tRNA ligase beta subunit (715 aa).

This sequence belongs to the class-II aminoacyl-tRNA synthetase family. Tetramer of two alpha and two beta subunits.

Its subcellular location is the cytoplasm. It carries out the reaction tRNA(Gly) + glycine + ATP = glycyl-tRNA(Gly) + AMP + diphosphate. The chain is Glycine--tRNA ligase beta subunit from Nitrosomonas eutropha (strain DSM 101675 / C91 / Nm57).